Here is a 627-residue protein sequence, read N- to C-terminus: Pescadillo homolog (627 aa).

A BRCT domain is found at 321–414 (RLRTLFKGLK…QLLPTNKYFI (94 aa)). Disordered regions lie at residues 436–471 (PEEK…AVDQ), 489–562 (YKKY…LQAR), and 596–627 (FEAG…KLGK). Residues serine 453 and serine 457 each carry the phosphoserine modification. 2 stretches are compositionally biased toward acidic residues: residues 453-471 (SDDD…AVDQ) and 498-521 (VNED…EELD). Residues 522 to 533 (EQAKRLKEEKQK) are compositionally biased toward basic and acidic residues. The segment covering 540–549 (KVHKVNKRQL) has biased composition (basic residues). Basic and acidic residues-rich tracts occupy residues 550 to 559 (HKAEVDEHRL) and 596 to 605 (FEAGEKEARK). The segment covering 616 to 627 (AAAAAKASKLGK) has biased composition (low complexity).

This sequence belongs to the pescadillo family.

The protein resides in the nucleus. It is found in the nucleolus. Its subcellular location is the nucleoplasm. Functionally, required for maturation of ribosomal RNAs and formation of the large ribosomal subunit. The chain is Pescadillo homolog from Drosophila ananassae (Fruit fly).